Consider the following 304-residue polypeptide: 15-cis-phytoene synthase (304 aa).

This sequence belongs to the phytoene/squalene synthase family. The cofactor is ATP. Requires Mn(2+) as cofactor. It depends on Mg(2+) as a cofactor.

It catalyses the reaction 2 (2E,6E,10E)-geranylgeranyl diphosphate = 15-cis-phytoene + 2 diphosphate. It functions in the pathway carotenoid biosynthesis; astaxanthin biosynthesis. The protein operates within carotenoid biosynthesis; phytoene biosynthesis. Its function is as follows. Involved in the biosynthesis of carotenoids for the production of astaxanthin. Catalyzes the condensation of two molecules of geranylgeranyl diphosphate (GGPP) to give prephytoene diphosphate (PPPP) and the subsequent rearrangement of the cyclopropylcarbinyl intermediate to yield 15-cis phytoene. In Paracoccus sp. (strain N81106 / MBIC 01143) (Agrobacterium aurantiacum), this protein is 15-cis-phytoene synthase (crtB).